A 1427-amino-acid chain; its full sequence is Lysophospholipase NTE1 (1427 aa).

Residues 1–60 are Cytoplasmic-facing; that stretch reads MDSLHVSSTSVLVDVVEAVETATSLVVDTAEAVATEQATPTAVISNALARSAYAAHTSLS. Residues 61 to 81 traverse the membrane as a helical segment; the sequence is YLAWAFGLWFLRLIGWVCYGI. Residues 82–96 lie on the Lumenal side of the membrane; sequence PTYVLGLLGRTINIS. A helical transmembrane segment spans residues 97 to 117; the sequence is LQFSSLLLILIALVTVVVAVV. Residues 118-1427 are Cytoplasmic-facing; it reads RYKYLTVYSR…KRTIARRNSI (1310 aa). Residues 281 to 296 show a composition bias toward polar residues; that stretch reads PMTSASDVPNMSLSSD. The disordered stretch occupies residues 281–315; sequence PMTSASDVPNMSLSSDGSDDLQKGEPQFGEPRLSE. A nucleoside 3',5'-cyclic phosphate-binding positions include 615–735 and 731–870; these read LMAA…LTKV and SLTK…VASR. The disordered stretch occupies residues 787–807; the sequence is GIVGGESGDAKDGKSHRKNLT. A PNPLA domain is found at 1124-1288; sequence LVLGGGGARG…VDNLPVSEMK (165 aa). The GXGXXG motif lies at 1128–1133; it reads GGGARG. The GXSXG signature appears at 1155-1159; sequence GTSIG. Catalysis depends on S1157, which acts as the Nucleophile. Residue D1275 is the Proton acceptor of the active site. The DGA/G signature appears at 1275–1277; it reads DGG.

The protein belongs to the NTE family.

The protein localises to the endoplasmic reticulum membrane. The catalysed reaction is a 1-acyl-sn-glycero-3-phosphocholine + H2O = sn-glycerol 3-phosphocholine + a fatty acid + H(+). Inhibited by organophosphorus esters. In terms of biological role, intracellular phospholipase B that catalyzes the double deacylation of phosphatidylcholine (PC) to glycerophosphocholine (GroPCho). Plays an important role in membrane lipid homeostasis. Responsible for the rapid PC turnover in response to inositol, elevated temperatures, or when choline is present in the growth medium. The protein is Lysophospholipase NTE1 (NTE1) of Yarrowia lipolytica (strain CLIB 122 / E 150) (Yeast).